A 466-amino-acid chain; its full sequence is Ribulose bisphosphate carboxylase large chain (466 aa).

The residue at position 5 (lysine 5) is an N6,N6,N6-trimethyllysine. Substrate contacts are provided by asparagine 114 and threonine 164. The active-site Proton acceptor is lysine 166. Position 168 (lysine 168) interacts with substrate. Lysine 192, aspartate 194, and glutamate 195 together coordinate Mg(2+). Residue lysine 192 is modified to N6-carboxylysine. Histidine 285 functions as the Proton acceptor in the catalytic mechanism. Residues arginine 286, histidine 318, and serine 370 each coordinate substrate.

This sequence belongs to the RuBisCO large chain family. Type I subfamily. Heterohexadecamer of 8 large chains and 8 small chains; disulfide-linked. The disulfide link is formed within the large subunit homodimers. The cofactor is Mg(2+). Post-translationally, the disulfide bond which can form in the large chain dimeric partners within the hexadecamer appears to be associated with oxidative stress and protein turnover.

It is found in the plastid. The protein resides in the chloroplast. The catalysed reaction is 2 (2R)-3-phosphoglycerate + 2 H(+) = D-ribulose 1,5-bisphosphate + CO2 + H2O. It carries out the reaction D-ribulose 1,5-bisphosphate + O2 = 2-phosphoglycolate + (2R)-3-phosphoglycerate + 2 H(+). Its function is as follows. RuBisCO catalyzes two reactions: the carboxylation of D-ribulose 1,5-bisphosphate, the primary event in carbon dioxide fixation, as well as the oxidative fragmentation of the pentose substrate in the photorespiration process. Both reactions occur simultaneously and in competition at the same active site. The polypeptide is Ribulose bisphosphate carboxylase large chain (Hedera helix (English ivy)).